Consider the following 54-residue polypeptide: UPF0181 protein PM0480 (54 aa).

The protein belongs to the UPF0181 family.

The sequence is that of UPF0181 protein PM0480 from Pasteurella multocida (strain Pm70).